We begin with the raw amino-acid sequence, 603 residues long: Methionine--tRNA ligase (603 aa).

Residues P14 to H24 carry the 'HIGH' region motif. Residues C146, C149, C159, and C162 each coordinate Zn(2+). The 'KMSKS' region signature appears at K354–S358. Position 357 (S357) interacts with ATP.

The protein belongs to the class-I aminoacyl-tRNA synthetase family. MetG type 1 subfamily. In terms of assembly, monomer. The cofactor is Zn(2+).

It localises to the cytoplasm. It carries out the reaction tRNA(Met) + L-methionine + ATP = L-methionyl-tRNA(Met) + AMP + diphosphate. Its function is as follows. Is required not only for elongation of protein synthesis but also for the initiation of all mRNA translation through initiator tRNA(fMet) aminoacylation. The polypeptide is Methionine--tRNA ligase (Salinispora tropica (strain ATCC BAA-916 / DSM 44818 / JCM 13857 / NBRC 105044 / CNB-440)).